The primary structure comprises 227 residues: MKTVLVDWNLIPYAEAWQRQTEWFDTLVRAKAQGEAYENRIIMCEHPHVYTLGRSGKENNMLLNDDQLKAIQATLFHIDRGGDITYHGPGQLVCYPILNLEEFHLGLKEYVHLLEEAVIRVCASYGIEAGRLEKATGVWLEGSTPRARKICAIGVRSSHYVTMHGLALNVNTDLRYFSYIHPCGFIDKGVTSLRQELKHEVPMDEVKQRLECELGRLLNEKKQQIAQ.

Residues 35–222 (EAYENRIIMC…ELGRLLNEKK (188 aa)) enclose the BPL/LPL catalytic domain. Substrate contacts are provided by residues 80–87 (RGGDITYH), 152–154 (AIG), and 165–167 (GLA). The active-site Acyl-thioester intermediate is the cysteine 183.

Belongs to the LipB family.

It is found in the cytoplasm. It catalyses the reaction octanoyl-[ACP] + L-lysyl-[protein] = N(6)-octanoyl-L-lysyl-[protein] + holo-[ACP] + H(+). The protein operates within protein modification; protein lipoylation via endogenous pathway; protein N(6)-(lipoyl)lysine from octanoyl-[acyl-carrier-protein]: step 1/2. Functionally, catalyzes the transfer of endogenously produced octanoic acid from octanoyl-acyl-carrier-protein onto the lipoyl domains of lipoate-dependent enzymes. Lipoyl-ACP can also act as a substrate although octanoyl-ACP is likely to be the physiological substrate. This is Octanoyltransferase from Bacteroides thetaiotaomicron (strain ATCC 29148 / DSM 2079 / JCM 5827 / CCUG 10774 / NCTC 10582 / VPI-5482 / E50).